The following is a 156-amino-acid chain: Small ribosomal subunit protein uS7 (156 aa).

This sequence belongs to the universal ribosomal protein uS7 family. Part of the 30S ribosomal subunit. Contacts proteins S9 and S11.

Functionally, one of the primary rRNA binding proteins, it binds directly to 16S rRNA where it nucleates assembly of the head domain of the 30S subunit. Is located at the subunit interface close to the decoding center, probably blocks exit of the E-site tRNA. The sequence is that of Small ribosomal subunit protein uS7 from Hyphomonas neptunium (strain ATCC 15444).